The sequence spans 182 residues: ADP-ribosylation factor 1 (182 aa).

A lipid anchor (N-myristoyl glycine) is attached at G2. An important for the stable binding to the membranes region spans residues 3–16 (NVFANLFKGLFGKK). GTP is bound by residues 24–32 (GLDAAGKTT), 126–129 (NKQD), and A160.

It belongs to the small GTPase superfamily. Arf family.

The protein localises to the golgi apparatus membrane. The protein resides in the cytoplasm. It is found in the cytosol. The enzyme catalyses GTP + H2O = GDP + phosphate + H(+). With respect to regulation, alternates between an inactive GDP-bound form and an active GTP-bound form. Activated by a guanine nucleotide-exchange factor (GEF) and inactivated by GTPase-activating protein (GAP). In terms of biological role, small GTPase involved in protein trafficking between different compartments. Modulates vesicle budding and uncoating within the Golgi complex. In its GTP-bound form, triggers the recruitment of coatomer proteins to the Golgi membrane. The hydrolysis of ARF1-bound GTP, which is mediated by ARFGAPs proteins, is required for dissociation of coat proteins from Golgi membranes and vesicles. Has a role in eye development. Required for cleavage furrow ingression in embryonic cells. The chain is ADP-ribosylation factor 1 from Drosophila melanogaster (Fruit fly).